The following is a 293-amino-acid chain: Aromatic amino acid exporter YddG (293 aa).

The Cytoplasmic portion of the chain corresponds to 1–6; it reads MTSQKA. Residues 7 to 27 traverse the membrane as a helical segment; sequence TLIGLVAIVLWSTMVGLIRGV. The 123-residue stretch at 15–137 folds into the EamA 1 domain; the sequence is VLWSTMVGLI…IALTGVCWVL (123 aa). Over 28–33 the chain is Periplasmic; sequence SEGLGP. A helical transmembrane segment spans residues 34-54; sequence VGGAAMIYSLSGLLLIFTVGL. Residues 55-63 lie on the Cytoplasmic side of the membrane; sequence PDIRRFPGR. The helical transmembrane segment at 64-84 threads the bilayer; the sequence is YLIAGSVLFVSYEICLALSLG. At 85 to 92 the chain is on the periplasmic side; the sequence is YAATRHQA. The helical transmembrane segment at 93-113 threads the bilayer; sequence IEVGMVNYLWPSLTILFAILF. Residues 114 to 119 are Cytoplasmic-facing; sequence NGQKTN. A helical transmembrane segment spans residues 120–140; sequence WLIVPGLLIALTGVCWVLGGE. Topologically, residues 141 to 147 are periplasmic; sequence NGLNPGE. A helical transmembrane segment spans residues 148–168; the sequence is IISNVATSPLSYLLAFLGAFI. The EamA 2 domain occupies 167–285; sequence FIWATYCTVT…AVMVCVGSLL (119 aa). Residues 169 to 182 lie on the Cytoplasmic side of the membrane; the sequence is WATYCTVTNKYARG. The chain crosses the membrane as a helical span at residues 183 to 203; the sequence is FNGITVFVLLTAVALWLHYFL. Residues 204 to 207 lie on the Periplasmic side of the membrane; it reads TPQP. The chain crosses the membrane as a helical span at residues 208 to 228; that stretch reads AMIFSLPVIAKLFTAALTLGF. Residues 229–243 are Cytoplasmic-facing; the sequence is AYAAWNVGILHGNVT. Residues 244–264 traverse the membrane as a helical segment; that stretch reads IMAVGSYFTPVMSSALAALLL. Residues 265–267 lie on the Periplasmic side of the membrane; sequence SSP. Residues 268–288 form a helical membrane-spanning segment; the sequence is LSFSFWQGAVMVCVGSLLCWL. At 289 to 293 the chain is on the cytoplasmic side; it reads ATRRR.

It belongs to the drug/metabolite transporter (DMT) superfamily. Aromatic amino acid/paraquat exporter (ArAA/P-E) (TC 2.A.7.17) family.

The protein localises to the cell inner membrane. Amino acid transporter with broad substrate specificity. Required for resistance to methyl viologen. May function with OmpD porin. The polypeptide is Aromatic amino acid exporter YddG (yddG) (Salmonella typhimurium (strain 14028s / SGSC 2262)).